Consider the following 784-residue polypeptide: Kinesin-like protein 6 (784 aa).

The 384-residue stretch at 6–389 folds into the Kinesin motor domain; it reads SISVAVRVRP…LKYGNRAKNI (384 aa). 134–141 serves as a coordination point for ATP; that stretch reads GATGCGKT. Coiled coils occupy residues 405-440 and 463-483; these read SEYV…EVRK and RDLQ…EDEI. Residues 677-715 are disordered; the sequence is SEVPTTSSVPPVEIKNKDSKPKVEKSLDKHNMNNDRSFL. Basic and acidic residues predominate over residues 690 to 709; sequence IKNKDSKPKVEKSLDKHNMN.

The protein belongs to the TRAFAC class myosin-kinesin ATPase superfamily. Kinesin family. Kinesin II subfamily. As to quaternary structure, heterodimer with klp5.

Its subcellular location is the cytoplasm. It is found in the cytoskeleton. The protein resides in the chromosome. The protein localises to the centromere. It localises to the kinetochore. Its subcellular location is the spindle. Functionally, has a role in establishing metaphase during mitosis. Required for chromosome segregation where it generates tension during kinetochore capturing. This Schizosaccharomyces pombe (strain 972 / ATCC 24843) (Fission yeast) protein is Kinesin-like protein 6 (klp6).